A 393-amino-acid polypeptide reads, in one-letter code: Protein shisa-9B (393 aa).

Positions 1-20 are cleaved as a signal peptide; it reads MKSTGLLLGYFLMKVLVCDA. The Extracellular segment spans residues 21-131; sequence EGEPGKSLDG…MDQHDPTKDK (111 aa). The interval 28–52 is disordered; the sequence is LDGAVTASGSNDSRDGENGLSETPH. N-linked (GlcNAc...) asparagine glycosylation occurs at Asn38. Residues 132–152 traverse the membrane as a helical segment; the sequence is TNLIVYIICGVVAIMALVGIF. Topologically, residues 153-393 are cytoplasmic; the sequence is TKLGLEKAHR…VTNSKTEVTV (241 aa). The disordered stretch occupies residues 307–340; it reads QKQNGHKSKSTKVHSSHPLAYGSNTIANPGRMSS. Residues 310–321 are compositionally biased toward basic residues; the sequence is NGHKSKSTKVHS.

Belongs to the shisa family. SHISA9 subfamily. As to quaternary structure, component of some AMPA receptors (ionotropic glutamate receptors) complex.

It is found in the cell projection. The protein resides in the dendritic spine membrane. Its subcellular location is the synapse. Functionally, regulator of short-term neuronal synaptic plasticity in the dentate gyrus. Associates with AMPA receptors (ionotropic glutamate receptors) in synaptic spines and promotes AMPA receptor desensitization at excitatory synapses. In Danio rerio (Zebrafish), this protein is Protein shisa-9B (shisa9b).